A 250-amino-acid chain; its full sequence is Uridylate kinase (250 aa).

17–20 (KLSG) contributes to the ATP binding site. Gly59 is a UMP binding site. ATP contacts are provided by Gly60 and Arg64. UMP-binding positions include Asp79 and 140-147 (TGNPYFTT). Thr167, Tyr173, and Asp176 together coordinate ATP.

Belongs to the UMP kinase family. Homohexamer.

The protein resides in the cytoplasm. It carries out the reaction UMP + ATP = UDP + ADP. It functions in the pathway pyrimidine metabolism; CTP biosynthesis via de novo pathway; UDP from UMP (UMPK route): step 1/1. Inhibited by UTP. In terms of biological role, catalyzes the reversible phosphorylation of UMP to UDP. In Myxococcus xanthus (strain DK1622), this protein is Uridylate kinase.